Here is a 466-residue protein sequence, read N- to C-terminus: Acetylcholine-gated chloride channel subunit acc-1 (466 aa).

A signal peptide spans 1–24 (MSHPGWIMVSFLTELLSQSSKGIA). Residues 25–242 (QSLDNCANDT…FVFERRYGWY (218 aa)) lie on the Extracellular side of the membrane. 3 N-linked (GlcNAc...) asparagine glycosylation sites follow: Asn32, Asn102, and Asn143. Cys158 and Cys172 are disulfide-bonded. N-linked (GlcNAc...) asparagine glycosylation is present at Asn211. A helical membrane pass occupies residues 243–263 (VLQGYIPTMVTIVISWISFYL). The Cytoplasmic segment spans residues 264–272 (GPRAIPART). A helical membrane pass occupies residues 273-290 (MLGVNSLLAMTFQFGNII). Over 291–304 (RNLPRVSYVKAIDV) the chain is Extracellular. The helical transmembrane segment at 305–325 (WMLSGMLFIFLSLLELAVVGF) threads the bilayer. Residues 326–427 (MSRNEGLPPK…MRELRPETVD (102 aa)) lie on the Cytoplasmic side of the membrane. A disordered region spans residues 333–352 (PPKVKKRKRQEDDDEGFSWK). Residues 428 to 448 (FYSAIFFPTAYMLFNISYWSF) form a helical membrane-spanning segment. The Extracellular segment spans residues 449-466 (YLTSLSEYFDEDVNIDQP).

Belongs to the ligand-gated ion channel (TC 1.A.9) family. Homopentamer (in vitro). Forms heteropentamers composed of acc-1 and acc-4 or acc-1 and acc-3. Both homopentamers and heteropentamers form functional ion channels. Expressed in a subset of cholinergic motor neurons including cholinergic motor neurons in the ventral cord, the retrovesicular ganglion and in head neurons such as the SMD, RMD motor neurons, the AVA and AVE command interneurons and the SAA neurons. Also expressed in a small number of glutamatergic neurons including the pharyngeal neurons MI and M3, the PLM neurons and a pair of neurons in the lateral ganglion.

Its subcellular location is the cell membrane. In terms of biological role, acetylcholine-gated chloride channel subunit. Forms functional homopentameric (in vitro) and functional heteropentameric ion channels with acc-3 and acc-4 ion channel subunits. Currents in channels are triggered in response to acetylcholine, but not in response to GABA, glutamate, glycine, histamine or dopamine. This chain is Acetylcholine-gated chloride channel subunit acc-1, found in Caenorhabditis elegans.